A 238-amino-acid chain; its full sequence is DNA repair protein RecO (238 aa).

Belongs to the RecO family.

Its function is as follows. Involved in DNA repair and RecF pathway recombination. This chain is DNA repair protein RecO, found in Anaplasma marginale (strain Florida).